Here is a 1258-residue protein sequence, read N- to C-terminus: Ice nucleation protein (1258 aa).

Residues 162-1217 (ATYGSTLSGT…LTAGENSVLI (1056 aa)) are octapeptide periodicity. 5 disordered regions span residues 260–287 (YGSTQTAGEDSSLTAGYGSTQTAQKGSD), 311–342 (TQTAGEESTQTAGYGSTQTAQKGSDLTAGYGS), 356–383 (YGSTQTAGEDSSLTAGYGSTQTAQKGSD), 407–438 (TQTAGEESTQTAGYGSTQTAQKGSDLTAGYGS), and 452–480 (YGSTQTAGEDSSLTAGYGSTQTAQKGSDL). Polar residues-rich tracts occupy residues 261-286 (GSTQTAGEDSSLTAGYGSTQTAQKGS), 311-334 (TQTAGEESTQTAGYGSTQTAQKGS), 357-382 (GSTQTAGEDSSLTAGYGSTQTAQKGS), 407-430 (TQTAGEESTQTAGYGSTQTAQKGS), and 453-480 (GSTQTAGEDSSLTAGYGSTQTAQKGSDL).

Belongs to the bacterial ice nucleation protein family.

Its subcellular location is the cell outer membrane. Functionally, ice nucleation proteins enable bacteria to nucleate crystallization in supercooled water. This Enterobacter agglomerans (Erwinia herbicola) protein is Ice nucleation protein (iceE).